A 625-amino-acid chain; its full sequence is Threonine--tRNA ligase (625 aa).

The segment at 1–149 (MRVLLIHAKR…RNYEAKTTAR (149 aa)) is editing domain. Catalytic regions lie at residues 197–494 (NPVN…PYIP) and 198–494 (PVNK…PYIP). 3 residues coordinate Zn(2+): C291, H342, and H463.

The protein belongs to the class-II aminoacyl-tRNA synthetase family. Homodimer. Zn(2+) serves as cofactor.

The protein localises to the cytoplasm. It carries out the reaction tRNA(Thr) + L-threonine + ATP = L-threonyl-tRNA(Thr) + AMP + diphosphate + H(+). Catalyzes the attachment of threonine to tRNA(Thr) in a two-step reaction: L-threonine is first activated by ATP to form Thr-AMP and then transferred to the acceptor end of tRNA(Thr). Also edits incorrectly charged L-seryl-tRNA(Thr). This chain is Threonine--tRNA ligase, found in Hyperthermus butylicus (strain DSM 5456 / JCM 9403 / PLM1-5).